The following is a 395-amino-acid chain: S-adenosylmethionine synthase (395 aa).

His-18 contacts ATP. Asp-20 contributes to the Mg(2+) binding site. Glu-46 contributes to the K(+) binding site. Positions 59 and 103 each coordinate L-methionine. A flexible loop region spans residues 103–113; that stretch reads QSADIAVGVDS. ATP contacts are provided by residues 170–172, Asp-244, 250–251, Ala-267, and Lys-271; these read DAK and RK. Asp-244 is a binding site for L-methionine. Lys-275 is an L-methionine binding site.

The protein belongs to the AdoMet synthase family. In terms of assembly, homotetramer; dimer of dimers. The cofactor is Mg(2+). Requires K(+) as cofactor.

The protein localises to the cytoplasm. The enzyme catalyses L-methionine + ATP + H2O = S-adenosyl-L-methionine + phosphate + diphosphate. The protein operates within amino-acid biosynthesis; S-adenosyl-L-methionine biosynthesis; S-adenosyl-L-methionine from L-methionine: step 1/1. Functionally, catalyzes the formation of S-adenosylmethionine (AdoMet) from methionine and ATP. The overall synthetic reaction is composed of two sequential steps, AdoMet formation and the subsequent tripolyphosphate hydrolysis which occurs prior to release of AdoMet from the enzyme. This chain is S-adenosylmethionine synthase, found in Gluconacetobacter diazotrophicus (strain ATCC 49037 / DSM 5601 / CCUG 37298 / CIP 103539 / LMG 7603 / PAl5).